Consider the following 290-residue polypeptide: 4-hydroxybenzoate octaprenyltransferase (290 aa).

The next 6 membrane-spanning stretches (helical) occupy residues 33 to 53, 99 to 119, 141 to 161, 213 to 233, 234 to 254, and 268 to 288; these read LWAL…AVFV, LFVI…VKTI, LPQV…FCAV, LIIG…GWLN, GLGA…IWQQ, and AFLN…LSYL.

Belongs to the UbiA prenyltransferase family. Requires Mg(2+) as cofactor.

The protein resides in the cell inner membrane. It carries out the reaction all-trans-octaprenyl diphosphate + 4-hydroxybenzoate = 4-hydroxy-3-(all-trans-octaprenyl)benzoate + diphosphate. The protein operates within cofactor biosynthesis; ubiquinone biosynthesis. Functionally, catalyzes the prenylation of para-hydroxybenzoate (PHB) with an all-trans polyprenyl group. Mediates the second step in the final reaction sequence of ubiquinone-8 (UQ-8) biosynthesis, which is the condensation of the polyisoprenoid side chain with PHB, generating the first membrane-bound Q intermediate 3-octaprenyl-4-hydroxybenzoate. The protein is 4-hydroxybenzoate octaprenyltransferase of Cronobacter sakazakii (strain ATCC BAA-894) (Enterobacter sakazakii).